A 105-amino-acid polypeptide reads, in one-letter code: Small ribosomal subunit protein uS10 (105 aa).

Belongs to the universal ribosomal protein uS10 family. In terms of assembly, part of the 30S ribosomal subunit.

Its function is as follows. Involved in the binding of tRNA to the ribosomes. The chain is Small ribosomal subunit protein uS10 from Francisella tularensis subsp. mediasiatica (strain FSC147).